The sequence spans 166 residues: MEAAPSPGSGLCCKPGGRLDMSHGFVHHIRRNQLARDDYDKKVKQAAKEKARRRHTPAPTRPRKPDLQVYLPRHRDGSTHPSNPDCEESGESSSSGSSEPEPPGHQLFCLEYEADSGDITSVIVYQDDDPGRVSEEVSAHTPLEPLMREALKLRIQEEIAKRQSRH.

A compositionally biased stretch (basic and acidic residues) spans 36–49 (RDDYDKKVKQAAKE). The interval 36–108 (RDDYDKKVKQ…EPEPPGHQLF (73 aa)) is disordered.

Belongs to the UPF0561 family.

This is UPF0561 protein C2orf68 homolog from Bos taurus (Bovine).